The chain runs to 377 residues: Protein RecA (377 aa).

The span at 1-13 (MSNEGKPLQSTES) shows a compositional bias: polar residues. The disordered stretch occupies residues 1 to 20 (MSNEGKPLQSTESTKIDAKS). Position 82-89 (82-89 (GPESSGKT)) interacts with ATP. The segment at 346–377 (GSEVSANSMRPLASAARQASSRPKLSQVSANG) is disordered. Over residues 362–377 (RQASSRPKLSQVSANG) the composition is skewed to polar residues.

The protein belongs to the RecA family.

Its subcellular location is the cytoplasm. Its function is as follows. Can catalyze the hydrolysis of ATP in the presence of single-stranded DNA, the ATP-dependent uptake of single-stranded DNA by duplex DNA, and the ATP-dependent hybridization of homologous single-stranded DNAs. It interacts with LexA causing its activation and leading to its autocatalytic cleavage. This Prochlorococcus marinus (strain NATL1A) protein is Protein RecA.